The sequence spans 745 residues: Elongation factor G, mitochondrial (745 aa).

The region spanning 40–317 (ERIRNIGISA…AVLDYLPNPG (278 aa)) is the tr-type G domain. Residues 49 to 56 (AHIDSGKT), 116 to 120 (DTPGH), and 170 to 173 (NKLD) each bind GTP.

It belongs to the TRAFAC class translation factor GTPase superfamily. Classic translation factor GTPase family. EF-G/EF-2 subfamily.

It is found in the mitochondrion. It participates in protein biosynthesis; polypeptide chain elongation. Its function is as follows. Mitochondrial GTPase that catalyzes the GTP-dependent ribosomal translocation step during translation elongation. During this step, the ribosome changes from the pre-translocational (PRE) to the post-translocational (POST) state as the newly formed A-site-bound peptidyl-tRNA and P-site-bound deacylated tRNA move to the P and E sites, respectively. Catalyzes the coordinated movement of the two tRNA molecules, the mRNA and conformational changes in the ribosome. Essential during development as it acts as a retrograde signal from mitochondria to the nucleus to slow down cell proliferation if mitochondrial energy output is low. This Drosophila yakuba (Fruit fly) protein is Elongation factor G, mitochondrial.